We begin with the raw amino-acid sequence, 295 residues long: Glutamyl-Q tRNA(Asp) synthetase (295 aa).

L-glutamate-binding positions include 5–9 (RFAPS) and Glu-41. The short motif at 8-18 (PSPTGLLHIGS) is the 'HIGH' region element. Zn(2+)-binding residues include Cys-97, Cys-99, Tyr-117, and Cys-121. L-glutamate-binding residues include Tyr-178 and Arg-196. A 'KMSKS' region motif is present at residues 234–238 (KWSKQ). Lys-237 provides a ligand contact to ATP.

It belongs to the class-I aminoacyl-tRNA synthetase family. GluQ subfamily. It depends on Zn(2+) as a cofactor.

Its function is as follows. Catalyzes the tRNA-independent activation of glutamate in presence of ATP and the subsequent transfer of glutamate onto a tRNA(Asp). Glutamate is transferred on the 2-amino-5-(4,5-dihydroxy-2-cyclopenten-1-yl) moiety of the queuosine in the wobble position of the QUC anticodon. The protein is Glutamyl-Q tRNA(Asp) synthetase of Neisseria meningitidis serogroup A / serotype 4A (strain DSM 15465 / Z2491).